The primary structure comprises 473 residues: Ribonuclease Y (473 aa).

A helical transmembrane segment spans residues 4-24 (LIAFIILLILFVLLITIVPVV). The 61-residue stretch at 158–218 (SLFNIDIIDE…IRREIARIVM (61 aa)) folds into the KH domain. The region spanning 285-378 (ILSHSLEVAE…VKIVDTLSAA (94 aa)) is the HD domain.

This sequence belongs to the RNase Y family.

The protein resides in the cell membrane. Endoribonuclease that initiates mRNA decay. The polypeptide is Ribonuclease Y (Ureaplasma parvum serovar 3 (strain ATCC 27815 / 27 / NCTC 11736)).